Consider the following 73-residue polypeptide: Small ribosomal subunit protein bS21 (73 aa).

It belongs to the bacterial ribosomal protein bS21 family.

This is Small ribosomal subunit protein bS21 from Parvibaculum lavamentivorans (strain DS-1 / DSM 13023 / NCIMB 13966).